Consider the following 108-residue polypeptide: Small ribosomal subunit protein bS16 (108 aa).

The interval 82-108 (ESKFSKNTQTENKKPVSKKTTKKSKDN) is disordered. The segment covering 96-108 (PVSKKTTKKSKDN) has biased composition (basic residues).

It belongs to the bacterial ribosomal protein bS16 family.

The protein is Small ribosomal subunit protein bS16 of Mycoplasma capricolum subsp. capricolum (strain California kid / ATCC 27343 / NCTC 10154).